Here is a 2772-residue protein sequence, read N- to C-terminus: Protein DDB_G0276689 (2772 aa).

Disordered regions lie at residues 50-82, 371-415, 475-514, 612-650, 685-708, and 933-982; these read QQLK…NNNN, NLET…NGKS, LDIN…KNNL, NKNN…NNNE, LRGS…DSSL, and LVNN…NNSN. 4 stretches are compositionally biased toward low complexity: residues 376–412, 478–514, 614–649, and 688–708; these read NNNN…NNNN, NSKN…KNNL, and SFSP…DSSL. Residues 1065 to 1089 form an LRR 1 repeat; sequence LSKWILNLDDNNYNHIPFMSLVLMP. The disordered stretch occupies residues 1282–1319; it reads NNNNIDNNNNNNNNNNNNNNNNNNNNNNNNNNNNNNNN. LRR repeat units follow at residues 1393–1416 and 1543–1567; these read LSNL…TPKN and HKDV…SFSN. Low complexity predominate over residues 1587–1619; it reads QNNNYNNNNYNNNYNNNNNNNNNNNNNNNNNNN. Positions 1587–1622 are disordered; the sequence is QNNNYNNNNYNNNYNNNNNNNNNNNNNNNNNNNIDN. Residues 1899-1922 form an LRR 4 repeat; sequence LEELTKQEIGYQVLLVLPTDLQVE. 2 stretches are compositionally biased toward polar residues: residues 1999–2011 and 2073–2083; these read YVSN…NDQI and LNIVHSTSPNS. 3 disordered regions span residues 1999–2021, 2054–2083, and 2367–2386; these read YVSN…KDKK, EISN…SPNS, and NNSS…NNNN. One copy of the LRR 5 repeat lies at 2414-2439; it reads TTIINNIEMDKNRLDEAIYYLKKYGN.

The sequence is that of Protein DDB_G0276689 from Dictyostelium discoideum (Social amoeba).